Reading from the N-terminus, the 149-residue chain is Transcriptional repressor NrdR (149 aa).

A zinc finger lies at 3 to 34 (CPFCCAVDTKVIDSRLVGEGSSVRRRRQCVVC). Positions 49-139 (PRVVKSNDVR…VYRSFEDIRE (91 aa)) constitute an ATP-cone domain.

Belongs to the NrdR family. Requires Zn(2+) as cofactor.

Negatively regulates transcription of bacterial ribonucleotide reductase nrd genes and operons by binding to NrdR-boxes. The sequence is that of Transcriptional repressor NrdR from Erwinia tasmaniensis (strain DSM 17950 / CFBP 7177 / CIP 109463 / NCPPB 4357 / Et1/99).